Consider the following 1798-residue polypeptide: MASSLAAQLSQIAAKSTNQLDLKAQRIAHSQSLIFDRKVASIQDFDTVYQICYEGFQELCQLDSRFTAFERTIFSEQSKAEDRTQLTAAQNKELDVALEAFLALVGGRLLLNPAIKAVEWLVRRFRIHEYNTSFTILTFLPYYTTPLFLNLLAILPEDLTPTFKVLIPYKKSSINPPRHPLVHSATTNKPFLAALNSYVLQVSRQQAHHHALLAFWAGVYTEAVAGMLDASRSGRREIEKQKHEDIVISVLPILNDGFAMKNVSELIIGCYMVSVVLAQKASLQDKVLDSLMEAVAGSWTEETVESGLVCLAVLAQQKPETKLPRRALKAILRLDDIFKRLTELATQYKTSHLLLGVVAGCLDDLPRQKDTARLDLLSQIFQNQLLGEPEMSKAMALVLEATSSVHKDGAMSLDAQARLADLVQVFSQSESLRPTFQKTIAESSFDIAALEHNLQTVIDTAPAPRTVEDVEMEDVEKEEEQDHFSSTVESLSGEKLFKGSFLSTQSIPLFEKLAQAFTLAIGSKEKCQTFSDLAALGKNEAEKSPQYLSFFIRVFSGPYSMGTRVTALNMITSFLTSTESTNLDFQALLPFLLVTLTDPSERVRREAAAALAAVGSLYKKNRKGEDIWARDNLYGQPKDIKWLPTRDAQKVFERAVLPSLEECIFDATHIGKVLENTLRGVSVDANASELKKPLRLAFFTFLCSHAIELPLFTPKLGLLNILNRIDKAGGTTRTKELEPLLKTWRGFSEREVQDICEKERVPVSDVERQMVAIVTPKEKDSIMILLSNVSSHSESLRPSFIAAVFGRIKDIWARVAEDRQTVAAEQLFDISLGLSDLPLVNNSRDLLRSVQLPGSVLAQFLERIPVSLTDMEALGPAPKRRRTSQNNMIAMTVKDEAEFGKVMEKMTFILELVDSSSPETHPELADGLFQTLAALHHFKSQIQSGMSYLLSLTLGSLLAIVNRSKESAKAQFDTSVIRADLVVDCVRTTESPQVQNAALLLVAGLSVIAPELVLHSVMPIFTFMGSSVLRKDDDYSVSVIDQTIDQVVPALIQSLRDQKRDVVSGTSELLLSFTAAFEHIPSHRRLRLFHALITKLGTQDFLFAVLAMLANRYAMDKDVLVLMTGLVSDASAPVELTTYSKFLGLVSDSLKPKPGISQVLLGIGSDDGREPQKVAVDLLRDLAYLFKHSSLKVKMAKTFASEDEEAIRQLRSTFSQILEQVLTIGDSVQSMKLVSQANGDVLAALFGTLTLVDFLDTIEVLLERPNDELRRKVLRLLEGRLRQNPERDSASQIRVLDFLPTLVDIIRNSTDILLKHAAVACIDRIAEKYGKKDPSRVIGAAQVVASEACIGQTDDRIRIMGVLCLASMAETLGQVMIPALPEALSRSLALLELSLEEGKENSRLHDAVFSLFSALFVHIPYMISGPHLDKILLLSFKSANAEECEDDSRQEALKMMARKVDMAATLGAVDRNWQYAVQAGPVATKETLEVVSLAVEKHPKSATGKNIGVLSSILFKAFDLRREQLALGANATFDAADVDETEDALNDVTIKMIYKLNDTTFRPIFTKMLDWATSGLPKKDTQGSLARLTAFYKFLQVFFGTLQSIVTGYASYIIESVVSVLGKASPADKSTKALWLATMRLLRNAFEHDQDEFWQSPSHLNQISTPLINQLAHATNSSTAATVIAEAVPAITELAVAADSTDNHKELNTALMKFLRPSAGPNGKPAGGENPHTRLAALKAEQSLTEQLGEEWLALLPEMLPYISELMEDEDENVEREVRKWVKQIENVLGEKLDDMLT.

One copy of the HEAT 1 repeat lies at 583–620 (LDFQALLPFLLVTLTDPSERVRREAAAALAAVGSLYKK). 2 helical membrane passes run 942–962 (IQSG…AIVN) and 998–1018 (ALLL…HSVM). 4 HEAT repeats span residues 1042 to 1079 (QTID…AFEH), 1249 to 1286 (LTLV…QNPE), 1293 to 1331 (IRVL…KYGK), and 1754 to 1791 (ALLP…VLGE).

It belongs to the HEATR1/UTP10 family. In terms of assembly, component of the ribosomal small subunit (SSU) processome.

The protein resides in the nucleus. It is found in the nucleolus. The protein localises to the membrane. Functionally, involved in nucleolar processing of pre-18S ribosomal RNA. Involved in ribosome biosynthesis. The polypeptide is U3 small nucleolar RNA-associated protein 10 (Aspergillus fumigatus (strain ATCC MYA-4609 / CBS 101355 / FGSC A1100 / Af293) (Neosartorya fumigata)).